The primary structure comprises 419 residues: Zinc finger CCCH domain-containing protein 62 (419 aa).

A C3H1-type zinc finger spans residues 89–116 (SLRKWVCKYWKDGKCKRGEQCQFLHSWS). WD repeat units follow at residues 129–168 (GHNKELKGIALPEGSDKLFSVSIDGTLRVWDCNSGQCVHS), 210–247 (GVVGQVNAMTIANGMLFAGTSSGSILVWKATTDSESDP), 256–293 (GHSGEVTCFAVGGQMLYSGSVDKTIKMWDLNTLQCIMT), 296–335 (QHTGTVTSLLCWDKCLISSSLDGTIKVWAYSENGILKVVQ), and 383–419 (FSTHTIATLTIGPQGLLFSGDESGNLRVWTLAAGNKV).

This is Zinc finger CCCH domain-containing protein 62 (ZFWD4) from Arabidopsis thaliana (Mouse-ear cress).